The primary structure comprises 322 residues: CPX chromosomal region candidate gene 1 protein homolog (322 aa).

Polar residues-rich tracts occupy residues M1–P23 and T37–D78. The segment at M1–E83 is disordered.

The chain is CPX chromosomal region candidate gene 1 protein homolog (Cpxcr1) from Mus musculus (Mouse).